A 317-amino-acid chain; its full sequence is Protoheme IX farnesyltransferase (317 aa).

A run of 8 helical transmembrane segments spans residues 44–64 (IGLI…ANTF), 93–113 (HASV…WVLC), 116–136 (VLAG…YTKY), 143–163 (LNIV…WAVI), 178–198 (AIVL…ALAM), 221–241 (VTRQ…LLIP), 243–263 (ASWI…VMAV), and 288–308 (LAVY…TIGG).

The protein belongs to the UbiA prenyltransferase family. Protoheme IX farnesyltransferase subfamily.

The protein localises to the cell membrane. It catalyses the reaction heme b + (2E,6E)-farnesyl diphosphate + H2O = Fe(II)-heme o + diphosphate. It functions in the pathway porphyrin-containing compound metabolism; heme O biosynthesis; heme O from protoheme: step 1/1. In terms of biological role, converts heme B (protoheme IX) to heme O by substitution of the vinyl group on carbon 2 of heme B porphyrin ring with a hydroxyethyl farnesyl side group. In Corynebacterium diphtheriae (strain ATCC 700971 / NCTC 13129 / Biotype gravis), this protein is Protoheme IX farnesyltransferase.